The primary structure comprises 313 residues: Probable cell division protein WhiA (313 aa).

A DNA-binding region (H-T-H motif) is located at residues 280–313 (SLKELGAMLNPPIGKSGVNHRLKKLCSIADGLRQ).

It belongs to the WhiA family.

Its function is as follows. Involved in cell division and chromosome segregation. This Lachnoclostridium phytofermentans (strain ATCC 700394 / DSM 18823 / ISDg) (Clostridium phytofermentans) protein is Probable cell division protein WhiA.